A 529-amino-acid polypeptide reads, in one-letter code: UDP-glucuronosyltransferase 2B9 (529 aa).

The N-terminal stretch at 1 to 21 is a signal peptide; that stretch reads MSVKWTSVILLIQLSFYFSSG. N67, N68, and N88 each carry an N-linked (GlcNAc...) asparagine glycan. The chain crosses the membrane as a helical span at residues 494–514; the sequence is IGFLLACVATVIFVIMKCCLF.

Belongs to the UDP-glycosyltransferase family.

The protein localises to the microsome membrane. It localises to the endoplasmic reticulum membrane. The catalysed reaction is glucuronate acceptor + UDP-alpha-D-glucuronate = acceptor beta-D-glucuronoside + UDP + H(+). Functionally, UDPGT is of major importance in the conjugation and subsequent elimination of potentially toxic xenobiotics and endogenous compounds. This isozyme is active on C18, C19, and C21 steroids, bile acids, and several xenobiotics including eugenol, 1-naphthol, and p-nitrophenol. The polypeptide is UDP-glucuronosyltransferase 2B9 (UGT2B9) (Macaca fascicularis (Crab-eating macaque)).